Consider the following 1498-residue polypeptide: DNA-directed RNA polymerase subunit beta' (1498 aa).

4 residues coordinate Zn(2+): C67, C69, C82, and C85. Mg(2+) is bound by residues D499, D501, and D503. Zn(2+)-binding residues include C867, C943, C950, and C953.

The protein belongs to the RNA polymerase beta' chain family. The RNAP catalytic core consists of 2 alpha, 1 beta, 1 beta' and 1 omega subunit. When a sigma factor is associated with the core the holoenzyme is formed, which can initiate transcription. The cofactor is Mg(2+). Zn(2+) is required as a cofactor.

The catalysed reaction is RNA(n) + a ribonucleoside 5'-triphosphate = RNA(n+1) + diphosphate. DNA-dependent RNA polymerase catalyzes the transcription of DNA into RNA using the four ribonucleoside triphosphates as substrates. The protein is DNA-directed RNA polymerase subunit beta' of Chlorobium luteolum (strain DSM 273 / BCRC 81028 / 2530) (Pelodictyon luteolum).